The chain runs to 57 residues: Large ribosomal subunit protein bL33 (57 aa).

Belongs to the bacterial ribosomal protein bL33 family.

This chain is Large ribosomal subunit protein bL33, found in Bifidobacterium longum (strain NCC 2705).